Reading from the N-terminus, the 283-residue chain is Undecaprenyl-diphosphatase (283 aa).

The next 6 membrane-spanning stretches (helical) occupy residues 47–67 (PGLS…IAYF), 94–114 (LGIA…CIKL), 127–147 (VPAI…AELL), 197–217 (AARF…LVEL), 227–247 (GGVL…WLAI), and 261–281 (IFVV…SGSA).

This sequence belongs to the UppP family.

It is found in the cell inner membrane. The enzyme catalyses di-trans,octa-cis-undecaprenyl diphosphate + H2O = di-trans,octa-cis-undecaprenyl phosphate + phosphate + H(+). Its function is as follows. Catalyzes the dephosphorylation of undecaprenyl diphosphate (UPP). Confers resistance to bacitracin. The chain is Undecaprenyl-diphosphatase from Synechococcus sp. (strain CC9311).